Reading from the N-terminus, the 113-residue chain is UPF0342 protein SMU_782 (113 aa).

The protein belongs to the UPF0342 family.

This Streptococcus mutans serotype c (strain ATCC 700610 / UA159) protein is UPF0342 protein SMU_782.